The sequence spans 357 residues: MSKKILILPGDGIGHEIVAEAVKVLEHVNVRHTLNMRLSFDALGGAAYEKYGSPLADETLARAREADAVLLGAVGGPQWDTIDPALRPERGLLKIRAQLGLFANLRPALLYPQLADASTLKPEVVAGLDILIVRELTGGLYFGQPRGSRISKNGEREAFDTLPYCESEIRRILKVGFEMARLRGKKLCSVDKANVLASSQLWRTVAGEMAKDYPDVTLSHMYVDNAAMQLVRYPKQFDVIVTENMFGDILSDQASMLTGSIGMLPSASLDANNKGMYEPCHGSAPDIAGQGVANPLATILSVAMLLRYGMGYIKTADAIEYAVGVVLDSGLRTADIWSEGMTKVGTVAMGDAVVAAL.

Residue 76-89 (GPQWDTIDPALRPE) coordinates NAD(+). Residues Arg96, Arg106, Arg134, and Asp224 each coordinate substrate. Residues Asp224, Asp248, and Asp252 each contribute to the Mg(2+) site. Residue 282 to 294 (GSAPDIAGQGVAN) coordinates NAD(+).

It belongs to the isocitrate and isopropylmalate dehydrogenases family. LeuB type 1 subfamily. Homodimer. Mg(2+) serves as cofactor. It depends on Mn(2+) as a cofactor.

The protein resides in the cytoplasm. The enzyme catalyses (2R,3S)-3-isopropylmalate + NAD(+) = 4-methyl-2-oxopentanoate + CO2 + NADH. It participates in amino-acid biosynthesis; L-leucine biosynthesis; L-leucine from 3-methyl-2-oxobutanoate: step 3/4. Catalyzes the oxidation of 3-carboxy-2-hydroxy-4-methylpentanoate (3-isopropylmalate) to 3-carboxy-4-methyl-2-oxopentanoate. The product decarboxylates to 4-methyl-2 oxopentanoate. The chain is 3-isopropylmalate dehydrogenase from Xylella fastidiosa (strain Temecula1 / ATCC 700964).